Reading from the N-terminus, the 387-residue chain is Cytochrome b (387 aa).

4 helical membrane-spanning segments follow: residues 32–52 (FGSLLACVLVVQIVTGILLAC), 76–98 (FLLRALHANGASFFFIFLYLHIG), 113–133 (TWNIGVIIFLLTIITAFLGYC), and 179–199 (FFSLHYLMPFVIAALSIMHLI). Residues His-82 and His-96 each contribute to the heme b site. Residues His-183 and His-197 each coordinate heme b. Position 202 (His-202) interacts with a ubiquinone. Helical transmembrane passes span 225–245 (FLIKDLITIFIFLLAINYMVF), 289–309 (QLGVVAMLLSILVLLLLPLLD), 321–341 (MGKFFFWCFVADFCILAWIGG), and 348–368 (FITIGAYATAFYFIYFFILIP).

Belongs to the cytochrome b family. Fungal cytochrome b-c1 complex contains 10 subunits; 3 respiratory subunits, 2 core proteins and 5 low-molecular weight proteins. Cytochrome b-c1 complex is a homodimer. Requires heme b as cofactor.

The protein localises to the mitochondrion inner membrane. Functionally, component of the ubiquinol-cytochrome c reductase complex (complex III or cytochrome b-c1 complex) that is part of the mitochondrial respiratory chain. The b-c1 complex mediates electron transfer from ubiquinol to cytochrome c. Contributes to the generation of a proton gradient across the mitochondrial membrane that is then used for ATP synthesis. The protein is Cytochrome b (cob) of Schizosaccharomyces octosporus (Fission yeast).